The primary structure comprises 459 residues: Zinc finger protein ZFP2 (459 aa).

13 C2H2-type zinc fingers span residues 100 to 122 (YGCDECGKTFRQSSSLLKHQRIH), 128 to 150 (YTCNVCDKHFIERSSLTVHQRTH), 156 to 178 (YKCHECGKAFSQSMNLTVHQRTH), 184 to 206 (YQCKECGKAFRKNSSLIQHERIH), 212 to 234 (YKCHDCGKAFTQSMNLTVHQRTH), 240 to 262 (YECNQCGKAFSQSMHLIVHQRSH), 268 to 290 (YECSECGKAFSKSSTLTLHQRNH), 296 to 318 (YKCNKCGKSFSQSTYLIEHQRLH), 324 to 346 (FECNQCGKAFSKNSSLTQHRRIH), 352 to 374 (YECMICGKHFTGRSSLTVHQVIH), 380 to 402 (YECTECGKAFSQSAYLIEHQRIH), 408 to 430 (YECDQCGKAFIKNSSLIVHQRIH), and 436 to 458 (YQCNECGKSFSRSTNLTRHQRTH).

Belongs to the krueppel C2H2-type zinc-finger protein family.

It localises to the nucleus. Probable transcription factor involved in neuronal differentiation and/or phenotypic maintenance. This Mus musculus (Mouse) protein is Zinc finger protein ZFP2 (Zfp2).